A 328-amino-acid chain; its full sequence is Sulfate adenylyltransferase subunit 2 (328 aa).

2 disordered regions span residues 15–34 and 304–328; these read AAPD…PSSH and SERE…EGYF.

It belongs to the PAPS reductase family. CysD subfamily. As to quaternary structure, heterodimer composed of CysD, the smaller subunit, and CysN.

The catalysed reaction is sulfate + ATP + H(+) = adenosine 5'-phosphosulfate + diphosphate. It participates in sulfur metabolism; hydrogen sulfide biosynthesis; sulfite from sulfate: step 1/3. With CysN forms the ATP sulfurylase (ATPS) that catalyzes the adenylation of sulfate producing adenosine 5'-phosphosulfate (APS) and diphosphate, the first enzymatic step in sulfur assimilation pathway. APS synthesis involves the formation of a high-energy phosphoric-sulfuric acid anhydride bond driven by GTP hydrolysis by CysN coupled to ATP hydrolysis by CysD. This is Sulfate adenylyltransferase subunit 2 from Rhodopseudomonas palustris (strain BisA53).